Here is a 588-residue protein sequence, read N- to C-terminus: Proline--tRNA ligase (588 aa).

This sequence belongs to the class-II aminoacyl-tRNA synthetase family. ProS type 1 subfamily. In terms of assembly, homodimer.

Its subcellular location is the cytoplasm. The catalysed reaction is tRNA(Pro) + L-proline + ATP = L-prolyl-tRNA(Pro) + AMP + diphosphate. Functionally, catalyzes the attachment of proline to tRNA(Pro) in a two-step reaction: proline is first activated by ATP to form Pro-AMP and then transferred to the acceptor end of tRNA(Pro). As ProRS can inadvertently accommodate and process non-cognate amino acids such as alanine and cysteine, to avoid such errors it has two additional distinct editing activities against alanine. One activity is designated as 'pretransfer' editing and involves the tRNA(Pro)-independent hydrolysis of activated Ala-AMP. The other activity is designated 'posttransfer' editing and involves deacylation of mischarged Ala-tRNA(Pro). The misacylated Cys-tRNA(Pro) is not edited by ProRS. This is Proline--tRNA ligase from Corynebacterium glutamicum (strain ATCC 13032 / DSM 20300 / JCM 1318 / BCRC 11384 / CCUG 27702 / LMG 3730 / NBRC 12168 / NCIMB 10025 / NRRL B-2784 / 534).